We begin with the raw amino-acid sequence, 203 residues long: uncharacterized protein (203 aa).

This is an uncharacterized protein from Caldicellulosiruptor sp. (strain Rt8B.4).